Here is a 292-residue protein sequence, read N- to C-terminus: ATP phosphoribosyltransferase (292 aa).

This sequence belongs to the ATP phosphoribosyltransferase family. Long subfamily. It depends on Mg(2+) as a cofactor.

The protein resides in the cytoplasm. It carries out the reaction 1-(5-phospho-beta-D-ribosyl)-ATP + diphosphate = 5-phospho-alpha-D-ribose 1-diphosphate + ATP. It participates in amino-acid biosynthesis; L-histidine biosynthesis; L-histidine from 5-phospho-alpha-D-ribose 1-diphosphate: step 1/9. With respect to regulation, feedback inhibited by histidine. Functionally, catalyzes the condensation of ATP and 5-phosphoribose 1-diphosphate to form N'-(5'-phosphoribosyl)-ATP (PR-ATP). Has a crucial role in the pathway because the rate of histidine biosynthesis seems to be controlled primarily by regulation of HisG enzymatic activity. This is ATP phosphoribosyltransferase from Gemmatimonas aurantiaca (strain DSM 14586 / JCM 11422 / NBRC 100505 / T-27).